A 231-amino-acid chain; its full sequence is Probable septum site-determining protein MinC (231 aa).

The protein belongs to the MinC family. As to quaternary structure, interacts with MinD and FtsZ.

In terms of biological role, cell division inhibitor that blocks the formation of polar Z ring septums. Rapidly oscillates between the poles of the cell to destabilize FtsZ filaments that have formed before they mature into polar Z rings. Prevents FtsZ polymerization. This chain is Probable septum site-determining protein MinC, found in Bradyrhizobium diazoefficiens (strain JCM 10833 / BCRC 13528 / IAM 13628 / NBRC 14792 / USDA 110).